We begin with the raw amino-acid sequence, 263 residues long: Uroplakin-3b-like protein 1 (263 aa).

Residues 1-33 (MDNSWRLGPAIGLSAGQSQLLVSLLLLLTRVQP) form the signal peptide. Topologically, residues 34-204 (GTDVAAPEHI…PGPQSPGTVV (171 aa)) are extracellular. Residues Asn-51, Asn-76, and Asn-91 are each glycosylated (N-linked (GlcNAc...) asparagine). Residues 205–225 (IIAILSILLAVLLTVLLAVLI) traverse the membrane as a helical segment. The Cytoplasmic segment spans residues 226 to 263 (YTCFNSCRSTSLSGPEEAGSVRRYTTHLAFSTPAEGAS).

It belongs to the uroplakin-3 family.

The protein resides in the membrane. This Homo sapiens (Human) protein is Uroplakin-3b-like protein 1.